The sequence spans 195 residues: Imidazoleglycerol-phosphate dehydratase (195 aa).

It belongs to the imidazoleglycerol-phosphate dehydratase family.

It localises to the cytoplasm. It carries out the reaction D-erythro-1-(imidazol-4-yl)glycerol 3-phosphate = 3-(imidazol-4-yl)-2-oxopropyl phosphate + H2O. It participates in amino-acid biosynthesis; L-histidine biosynthesis; L-histidine from 5-phospho-alpha-D-ribose 1-diphosphate: step 6/9. In Deinococcus deserti (strain DSM 17065 / CIP 109153 / LMG 22923 / VCD115), this protein is Imidazoleglycerol-phosphate dehydratase.